The primary structure comprises 350 residues: Biotin synthase (350 aa).

One can recognise a Radical SAM core domain in the interval 63–281; it reads GDIELATLLS…IAVARITMPK (219 aa). Positions 78, 82, and 85 each coordinate [4Fe-4S] cluster. Residues Cys-122, Cys-153, Cys-213, and Arg-285 each contribute to the [2Fe-2S] cluster site.

Belongs to the radical SAM superfamily. Biotin synthase family. Homodimer. Requires [4Fe-4S] cluster as cofactor. [2Fe-2S] cluster serves as cofactor.

It catalyses the reaction (4R,5S)-dethiobiotin + (sulfur carrier)-SH + 2 reduced [2Fe-2S]-[ferredoxin] + 2 S-adenosyl-L-methionine = (sulfur carrier)-H + biotin + 2 5'-deoxyadenosine + 2 L-methionine + 2 oxidized [2Fe-2S]-[ferredoxin]. It participates in cofactor biosynthesis; biotin biosynthesis; biotin from 7,8-diaminononanoate: step 2/2. Its function is as follows. Catalyzes the conversion of dethiobiotin (DTB) to biotin by the insertion of a sulfur atom into dethiobiotin via a radical-based mechanism. The chain is Biotin synthase from Acidovorax ebreus (strain TPSY) (Diaphorobacter sp. (strain TPSY)).